The following is a 217-amino-acid chain: 3,4-dihydroxy-2-butanone 4-phosphate synthase (217 aa).

D-ribulose 5-phosphate-binding positions include 37–38, Asp42, 150–154, and Glu174; these read RE and RRGHT. Glu38 provides a ligand contact to Mg(2+). Residue His153 participates in Mg(2+) binding.

The protein belongs to the DHBP synthase family. As to quaternary structure, homodimer. Mg(2+) is required as a cofactor. The cofactor is Mn(2+).

The enzyme catalyses D-ribulose 5-phosphate = (2S)-2-hydroxy-3-oxobutyl phosphate + formate + H(+). Its pathway is cofactor biosynthesis; riboflavin biosynthesis; 2-hydroxy-3-oxobutyl phosphate from D-ribulose 5-phosphate: step 1/1. Its function is as follows. Catalyzes the conversion of D-ribulose 5-phosphate to formate and 3,4-dihydroxy-2-butanone 4-phosphate. In Shewanella putrefaciens (strain CN-32 / ATCC BAA-453), this protein is 3,4-dihydroxy-2-butanone 4-phosphate synthase.